Here is a 229-residue protein sequence, read N- to C-terminus: Sugar fermentation stimulation protein homolog (229 aa).

It belongs to the SfsA family.

The sequence is that of Sugar fermentation stimulation protein homolog from Clostridium novyi (strain NT).